Reading from the N-terminus, the 391-residue chain is Formate-dependent phosphoribosylglycinamide formyltransferase (391 aa).

Residues 20-21 and glutamate 80 each bind N(1)-(5-phospho-beta-D-ribosyl)glycinamide; that span reads EL. ATP is bound by residues arginine 112, lysine 153, 158–163, 193–196, and glutamate 201; these read SSGKGQ and EGFV. Residues 117-306 enclose the ATP-grasp domain; sequence RLAAEELGLP…EFALHVRAFT (190 aa). Glutamate 265 and glutamate 277 together coordinate Mg(2+). N(1)-(5-phospho-beta-D-ribosyl)glycinamide contacts are provided by residues aspartate 284, lysine 354, and 361-362; that span reads RR.

The protein belongs to the PurK/PurT family. As to quaternary structure, homodimer.

The catalysed reaction is N(1)-(5-phospho-beta-D-ribosyl)glycinamide + formate + ATP = N(2)-formyl-N(1)-(5-phospho-beta-D-ribosyl)glycinamide + ADP + phosphate + H(+). The protein operates within purine metabolism; IMP biosynthesis via de novo pathway; N(2)-formyl-N(1)-(5-phospho-D-ribosyl)glycinamide from N(1)-(5-phospho-D-ribosyl)glycinamide (formate route): step 1/1. In terms of biological role, involved in the de novo purine biosynthesis. Catalyzes the transfer of formate to 5-phospho-ribosyl-glycinamide (GAR), producing 5-phospho-ribosyl-N-formylglycinamide (FGAR). Formate is provided by PurU via hydrolysis of 10-formyl-tetrahydrofolate. This Vibrio cholerae serotype O1 (strain ATCC 39315 / El Tor Inaba N16961) protein is Formate-dependent phosphoribosylglycinamide formyltransferase.